The sequence spans 141 residues: Nucleoside diphosphate kinase (141 aa).

ATP is bound by residues Lys11, Phe59, Arg87, Thr93, Arg104, and Asn114. The active-site Pros-phosphohistidine intermediate is the His117.

It belongs to the NDK family. In terms of assembly, homotetramer. Mg(2+) serves as cofactor.

The protein localises to the cytoplasm. It carries out the reaction a 2'-deoxyribonucleoside 5'-diphosphate + ATP = a 2'-deoxyribonucleoside 5'-triphosphate + ADP. The enzyme catalyses a ribonucleoside 5'-diphosphate + ATP = a ribonucleoside 5'-triphosphate + ADP. Its function is as follows. Major role in the synthesis of nucleoside triphosphates other than ATP. The ATP gamma phosphate is transferred to the NDP beta phosphate via a ping-pong mechanism, using a phosphorylated active-site intermediate. The chain is Nucleoside diphosphate kinase from Polaromonas sp. (strain JS666 / ATCC BAA-500).